The sequence spans 195 residues: Early light-induced protein 1, chloroplastic (195 aa).

The N-terminal 46 residues, 1 to 46, are a transit peptide targeting the chloroplast; the sequence is MATASFNMQSVFAGGLTTRKINTNKLFSAGSFPNLKRNYPVGVRCM. Residues 46-81 form a disordered region; that stretch reads MAEGGPTNEDSSPAPSTSAAQPLPKSPSPPPPMKPK. Residues 56-68 are compositionally biased toward low complexity; that stretch reads SSPAPSTSAAQPL. The span at 69–79 shows a compositional bias: pro residues; the sequence is PKSPSPPPPMK. 3 helical membrane-spanning segments follow: residues 104-124, 131-151, and 175-195; these read LAMV…ENVL, GVSW…VPLF, and FAML…GTLV.

This sequence belongs to the ELIP/psbS family.

The protein localises to the plastid. Its subcellular location is the chloroplast thylakoid membrane. Prevents excess accumulation of free chlorophyll by inhibiting the entire chlorophyll biosynthesis pathway (e.g. 5-aminolevulinate synthesis and Mg-protoporphyrin IX chelatase activity), and hence prevent photooxidative stress. Probably involved in the integration of pigments into the mature light-harvesting pigment-protein complexes. Light-harvesting chlorophyll (LHC) a/b-binding protein required to ensure a high rate of chlorophyll accumulation during deetiolation in continuous high light. Involved in seed germination. May fulfill a photoprotective functions. This chain is Early light-induced protein 1, chloroplastic, found in Arabidopsis thaliana (Mouse-ear cress).